Reading from the N-terminus, the 333-residue chain is Abequosyltransferase RfbV (333 aa).

This sequence belongs to the glycosyltransferase 2 family.

The catalysed reaction is CDP-alpha-D-abequose + alpha-D-Man-(1-&gt;4)-alpha-L-Rha-(1-&gt;3)-alpha-D-Gal-di-trans,octa-cis-undecaprenyl diphosphate = alpha-D-Abe-(1-&gt;3)-alpha-D-Man-(1-&gt;4)-alpha-L-Rha-(1-&gt;3)-alpha-D-Gal-di-trans,octa-cis-undecaprenyl diphosphate + CDP + H(+). It functions in the pathway bacterial outer membrane biogenesis; LPS O-antigen biosynthesis. Its function is as follows. Catalyzes the transfer of CDP-abequose on D-mannosyl-L-rhamnosyl-D-galactose-1-diphospholipid to yield D-abequosyl-D-mannosyl-rhamnosyl-D-galactose-1-diphospholipid. The sequence is that of Abequosyltransferase RfbV (rfbV) from Salmonella typhimurium (strain LT2 / SGSC1412 / ATCC 700720).